We begin with the raw amino-acid sequence, 164 residues long: Hydroxylaminobenzene mutase HabB (164 aa).

Transmembrane regions (helical) follow at residues leucine 16 to methionine 36, glycine 50 to glycine 70, phenylalanine 78 to tryptophan 98, and leucine 121 to leucine 141.

Its subcellular location is the cell membrane. It carries out the reaction N-phenylhydroxylamine = 2-aminophenol. With respect to regulation, addition of ZnSO(4) decreases the activity to 70%. Catalyzes the rearrangement of hydroxylaminobenzene to 2-aminophenol. The chain is Hydroxylaminobenzene mutase HabB (habB) from Ectopseudomonas oleovorans (Pseudomonas oleovorans).